The primary structure comprises 406 residues: Eukaryotic initiation factor 4A-I (406 aa).

The interval methionine 1 to glycine 21 is disordered. Position 2 is an N-acetylserine (serine 2). Serine 4 is subject to Phosphoserine. The short motif at aspartate 32 to glutamine 60 is the Q motif element. The Helicase ATP-binding domain occupies isoleucine 63–isoleucine 234. ATP is bound at residue alanine 76–threonine 83. Lysine 118 is modified (N6-acetyllysine). Lysine 146 participates in a covalent cross-link: Glycyl lysine isopeptide (Lys-Gly) (interchain with G-Cter in SUMO2). Threonine 158 carries the phosphothreonine modification. Lysine 174 carries the post-translational modification N6-acetyllysine. Residues aspartate 182–aspartate 185 carry the DEAD box motif. An N6-acetyllysine modification is found at lysine 193. A Glycyl lysine isopeptide (Lys-Gly) (interchain with G-Cter in SUMO2) cross-link involves residue lysine 225. Lysine 238 carries the N6-acetyllysine; alternate modification. Lysine 238 is covalently cross-linked (Glycyl lysine isopeptide (Lys-Gly) (interchain with G-Cter in SUMO2); alternate). The region spanning glycine 245 to isoleucine 406 is the Helicase C-terminal domain. Glycyl lysine isopeptide (Lys-Gly) (interchain with G-Cter in SUMO2) cross-links involve residues lysine 309, lysine 369, and lysine 381.

Belongs to the DEAD box helicase family. eIF4A subfamily. EIF4F is a multi-subunit complex, the composition of which varies with external and internal environmental conditions. It is composed of at least EIF4A, EIF4E and EIF4G1/EIF4G3. Interacts with PAIP1, EIF4E and UPF2. Found in a complex with XPO7, EIF4A1, ARHGAP1, VPS26A, VPS29, VPS35 and SFN. May interact with NOM1. Interacts with PDCD4; this interferes with the interaction between EIF4A and EIF4G. Interacts with RBM4. Interacts with DDX3X in an RNA-independent manner. Interacts with PKP1 (via N-terminus); the interaction promotes EIF4A1 recruitment to the cap-dependent translation complex and EIF4A1 ATPase activity.

The protein localises to the cytoplasm. It is found in the perinuclear region. The protein resides in the cell membrane. Its subcellular location is the stress granule. The enzyme catalyses ATP + H2O = ADP + phosphate + H(+). Its function is as follows. ATP-dependent RNA helicase which is a subunit of the eIF4F complex involved in cap recognition and is required for mRNA binding to ribosome. In the current model of translation initiation, eIF4A unwinds RNA secondary structures in the 5'-UTR of mRNAs which is necessary to allow efficient binding of the small ribosomal subunit, and subsequent scanning for the initiator codon. As a result, promotes cell proliferation and growth. In Pongo abelii (Sumatran orangutan), this protein is Eukaryotic initiation factor 4A-I (EIF4A1).